The primary structure comprises 144 residues: Large ribosomal subunit protein uL11 (144 aa).

It belongs to the universal ribosomal protein uL11 family. As to quaternary structure, part of the ribosomal stalk of the 50S ribosomal subunit. Interacts with L10 and the large rRNA to form the base of the stalk. L10 forms an elongated spine to which L12 dimers bind in a sequential fashion forming a multimeric L10(L12)X complex. In terms of processing, one or more lysine residues are methylated.

Functionally, forms part of the ribosomal stalk which helps the ribosome interact with GTP-bound translation factors. In Deinococcus geothermalis (strain DSM 11300 / CIP 105573 / AG-3a), this protein is Large ribosomal subunit protein uL11.